Here is a 35-residue protein sequence, read N- to C-terminus: Endochitinase 2 (35 aa).

The protein belongs to the glycosyl hydrolase 19 family. Chitinase class I subfamily.

It carries out the reaction Random endo-hydrolysis of N-acetyl-beta-D-glucosaminide (1-&gt;4)-beta-linkages in chitin and chitodextrins.. Defense against chitin-containing fungal pathogens. The sequence is that of Endochitinase 2 from Capsicum chinense (Scotch bonnet).